The chain runs to 327 residues: D-alanine--D-alanine ligase (327 aa).

In terms of domain architecture, ATP-grasp spans 113–312; that stretch reads KRLWMTYGLA…YEDFVMQVVA (200 aa). 139 to 194 contributes to the ATP binding site; sequence AADLGLPLIVKPAREGSSIGLTKVTAADQMRAAFEKAAALDNDVIAETFIDGAELT. Residues Asp266, Glu279, and Asn281 each coordinate Mg(2+).

This sequence belongs to the D-alanine--D-alanine ligase family. Requires Mg(2+) as cofactor. The cofactor is Mn(2+).

The protein localises to the cytoplasm. It catalyses the reaction 2 D-alanine + ATP = D-alanyl-D-alanine + ADP + phosphate + H(+). The protein operates within cell wall biogenesis; peptidoglycan biosynthesis. Functionally, cell wall formation. This is D-alanine--D-alanine ligase from Cupriavidus necator (strain ATCC 17699 / DSM 428 / KCTC 22496 / NCIMB 10442 / H16 / Stanier 337) (Ralstonia eutropha).